We begin with the raw amino-acid sequence, 363 residues long: Protein TAX-1 (363 aa).

Positions 129–363 (RYGNAEEILS…IPFRGVAAEQ (235 aa)) are required for localization to the flagellum and for flagellar motility. 2 TPR repeats span residues 157 to 190 (AELHQTFGLLYAADNKLDVSVKHLTCATYYLSVM) and 199 to 232 (TFAYFDLANVFATKACMEAAMALYDTVKNIWLKH).

In terms of assembly, interacts with TTC29.

It localises to the cytoplasm. It is found in the cytoskeleton. The protein localises to the flagellum axoneme. Required for flagellum motility. In Trypanosoma brucei brucei (strain 927/4 GUTat10.1), this protein is Protein TAX-1.